The following is a 441-amino-acid chain: Probable acetylornithine aminotransferase, mitochondrial (441 aa).

At Lys294 the chain carries N6-(pyridoxal phosphate)lysine.

The protein belongs to the class-III pyridoxal-phosphate-dependent aminotransferase family. Pyridoxal 5'-phosphate serves as cofactor.

The protein localises to the mitochondrion matrix. It carries out the reaction N(2)-acetyl-L-ornithine + 2-oxoglutarate = N-acetyl-L-glutamate 5-semialdehyde + L-glutamate. It participates in amino-acid biosynthesis; L-arginine biosynthesis; N(2)-acetyl-L-ornithine from L-glutamate: step 4/4. This Schizosaccharomyces pombe (strain 972 / ATCC 24843) (Fission yeast) protein is Probable acetylornithine aminotransferase, mitochondrial (arg1).